The following is a 767-amino-acid chain: Protein transport protein Sec23B (767 aa).

N-acetylalanine is present on A2. Zn(2+) is bound by residues C61, C66, C85, and C88. The residue at position 564 (K564) is an N6-acetyllysine. The stretch at P634 to L720 is one Gelsolin-like repeat.

It belongs to the SEC23/SEC24 family. SEC23 subfamily. As to quaternary structure, COPII is composed of at least five proteins: the Sec23/24 complex, the Sec13/31 complex and Sar1. Interacts with SAR1A.

The protein resides in the cytoplasmic vesicle. It localises to the COPII-coated vesicle membrane. It is found in the endoplasmic reticulum membrane. Its subcellular location is the cytoplasm. The protein localises to the cytosol. Its function is as follows. Component of the coat protein complex II (COPII) which promotes the formation of transport vesicles from the endoplasmic reticulum (ER). The coat has two main functions, the physical deformation of the endoplasmic reticulum membrane into vesicles and the selection of cargo molecules for their transport to the Golgi complex. The protein is Protein transport protein Sec23B of Mus musculus (Mouse).